Reading from the N-terminus, the 715-residue chain is Probable GTP diphosphokinase RSH3, chloroplastic (715 aa).

The transit peptide at 1–64 directs the protein to the chloroplast; the sequence is MVVATTIALY…LLFSGASVKS (64 aa). The span at 65–74 shows a compositional bias: low complexity; it reads SSSSSSSHPS. The disordered stretch occupies residues 65–84; the sequence is SSSSSSSHPSVGEELASIRH. The HD domain occupies 237–341; sequence YLQHCVETAM…IKLADRLHNM (105 aa).

This sequence belongs to the RelA/SpoT family. As to expression, expressed in roots, hypocotyls, shoots, cotyledons, rosette and cauline leaves, stems, petals, sepals, stamens, pistils and siliques.

The protein localises to the plastid. Its subcellular location is the chloroplast. It carries out the reaction GTP + ATP = guanosine 3'-diphosphate 5'-triphosphate + AMP. Its function is as follows. Possesses ppGpp (guanosine 3'-diphosphate 5'-diphosphate) synthetase activity in vitro and is able to functionally complement E.coli relA mutants. May be involved in a rapid plant ppGpp-mediated response to pathogens and other stresses. The protein is Probable GTP diphosphokinase RSH3, chloroplastic (RSH3) of Arabidopsis thaliana (Mouse-ear cress).